Consider the following 238-residue polypeptide: Ribonuclease PH (238 aa).

Phosphate contacts are provided by residues Arg-86 and 124–126; that span reads GTR.

It belongs to the RNase PH family. As to quaternary structure, homohexameric ring arranged as a trimer of dimers.

The enzyme catalyses tRNA(n+1) + phosphate = tRNA(n) + a ribonucleoside 5'-diphosphate. Its function is as follows. Phosphorolytic 3'-5' exoribonuclease that plays an important role in tRNA 3'-end maturation. Removes nucleotide residues following the 3'-CCA terminus of tRNAs; can also add nucleotides to the ends of RNA molecules by using nucleoside diphosphates as substrates, but this may not be physiologically important. Probably plays a role in initiation of 16S rRNA degradation (leading to ribosome degradation) during starvation. The protein is Ribonuclease PH of Trichlorobacter lovleyi (strain ATCC BAA-1151 / DSM 17278 / SZ) (Geobacter lovleyi).